A 57-amino-acid chain; its full sequence is Small ribosomal subunit protein eS27 (57 aa).

Zn(2+) contacts are provided by C10, C13, C29, and C32. The C4-type zinc finger occupies C10–C32.

It belongs to the eukaryotic ribosomal protein eS27 family. Part of the 30S ribosomal subunit. Zn(2+) is required as a cofactor.

The protein is Small ribosomal subunit protein eS27 of Halobacterium salinarum (strain ATCC 29341 / DSM 671 / R1).